A 634-amino-acid polypeptide reads, in one-letter code: Probable potassium transport system protein Kup (634 aa).

Transmembrane regions (helical) follow at residues 21-41, 58-78, 110-130, 152-172, 179-199, 223-243, 258-278, 296-316, 348-368, 377-397, 403-423, and 427-447; these read LVIG…LYTL, VLGI…LKYV, MYVV…DGVI, PFVV…QRFG, AFGP…VYNM, WHAV…EALY, WQFV…ALML, ALYP…QALI, IYVP…VIGF, AYGV…IIYA, VPAP…CAFF, and IIKF…LFTL.

Belongs to the HAK/KUP transporter (TC 2.A.72) family.

It is found in the cell inner membrane. The enzyme catalyses K(+)(in) + H(+)(in) = K(+)(out) + H(+)(out). Transport of potassium into the cell. Likely operates as a K(+):H(+) symporter. In Xanthomonas euvesicatoria pv. vesicatoria (strain 85-10) (Xanthomonas campestris pv. vesicatoria), this protein is Probable potassium transport system protein Kup.